The primary structure comprises 327 residues: Vacuolar protein sorting-associated protein 26A (327 aa).

The disordered stretch occupies residues 306–327 (RTNFHQRFESPESQASAEQPEM). Ser315 carries the phosphoserine modification. The segment covering 316 to 327 (PESQASAEQPEM) has biased composition (polar residues).

This sequence belongs to the VPS26 family. As to quaternary structure, component of the heterotrimeric retromer cargo-selective complex (CSC), also described as vacuolar protein sorting subcomplex (VPS), formed by VPS26 (VPS26A or VPS26B), VPS29 and VPS35. The CSC has a highly elongated structure with VPS26 and VPS29 binding independently at opposite distal ends of VPS35 as central platform. The CSC is believed to associate with variable sorting nexins to form functionally distinct retromer complex variants. The originally described retromer complex (also called SNX-BAR retromer) is a pentamer containing the CSC and a heterodimeric membrane-deforming subcomplex formed between SNX1 or SNX2 and SNX5 or SNX6 (also called SNX-BAR subcomplex); the respective CSC and SNX-BAR subcomplexes associate with low affinity. The CSC associates with SNX3 to form a SNX3-retromer complex. The CSC associates with SNX27, the WASH complex and the SNX-BAR subcomplex to form the SNX27-retromer complex. Interacts with VPS29, VPS35, SNX1, SNX2, SNX5, SNX6, SNX3, SNX27, RAB7A, ECPAS, EHD1, WASHC5, SORL1.

The protein resides in the cytoplasm. The protein localises to the endosome membrane. Its subcellular location is the early endosome. Functionally, acts as a component of the retromer cargo-selective complex (CSC). The CSC is believed to be the core functional component of retromer or respective retromer complex variants acting to prevent missorting of selected transmembrane cargo proteins into the lysosomal degradation pathway. The recruitment of the CSC to the endosomal membrane involves RAB7A and SNX3. The SNX-BAR retromer mediates retrograde transport of cargo proteins from endosomes to the trans-Golgi network (TGN) and is involved in endosome-to-plasma membrane transport for cargo protein recycling. The SNX3-retromer mediates the retrograde endosome-to-TGN transport of WLS distinct from the SNX-BAR retromer pathway. The SNX27-retromer is believed to be involved in endosome-to-plasma membrane trafficking and recycling of a broad spectrum of cargo proteins. The CSC seems to act as recruitment hub for other proteins, such as the WASH complex and TBC1D5. Required for retrograde transport of lysosomal enzyme receptor IGF2R. Required to regulate transcytosis of the polymeric immunoglobulin receptor (pIgR-pIgA). Required for the endosomal localization of WASHC2A (indicative for the WASH complex). Required for the endosomal localization of TBC1D5. Mediates retromer cargo recognition of SORL1 and is involved in trafficking of SORL1 implicated in sorting and processing of APP. Involved in retromer-independent lysosomal sorting of F2R. Involved in recycling of ADRB2. Enhances the affinity of SNX27 for PDZ-binding motifs in cargo proteins. The chain is Vacuolar protein sorting-associated protein 26A from Homo sapiens (Human).